A 500-amino-acid polypeptide reads, in one-letter code: Zinc finger protein ENHYDROUS (500 aa).

The disordered stretch occupies residues 1–42 (MPVDLDNSSTVSGDASVSSTGNQNLTPKSVGKKKRNLPGMPD). Over residues 8-21 (SSTVSGDASVSSTG) the composition is skewed to low complexity. S51 carries the phosphoserine modification. C2H2-type zinc fingers lie at residues 61-83 (FVCE…RRGH) and 102-132 (YVCP…CRKH). Residues 124–131 (IKKHFCRK) carry the Nuclear localization signal motif. The C2H2-type 2; degenerate zinc finger occupies 137–160 (WKCEKCSKKYAVQSDWKAHSKICG). C139, C142, H155, C159, C166, C168, H181, and C185 together coordinate Zn(2+). Residues 164–187 (YKCDCGTLFSRRDSFITHRAFCDA) form a CCHC-type 2; atypical zinc finger. Positions 174 to 186 (RRDSFITHRAFCD) are SHR-binding. Residues 196–236 (HTQSKKLYPETVTRKNPEIEQKSPAAVESSPSLPPSSPPSV) form a disordered region. The segment covering 207 to 216 (VTRKNPEIEQ) has biased composition (basic and acidic residues).

Interacts with the DELLA proteins (e.g. GAI/RGA2, RGA, RGL1, RGL2 and RGLG3), acting as coactivators. At 3 days post anthesis (DPA), expressed in the chalazal endosperm region. By 6 DPA, expressed in the endosperm and embryo. In fully germinated seed, strongest expression in the root tip and not detected in the cotyledons. In 4-days old seedlings, restricted to the vasculature of the cotyledons, the shoot apical meristem region, and the root tip. By 8 days, restricted to newly emerged leaves.

Its subcellular location is the nucleus. Transcription factor promoting the transition to germination by regulating light and hormonal signaling during seed maturation. Acts as a positive regulator of phytochrome and/or gibberellin action. In Arabidopsis thaliana (Mouse-ear cress), this protein is Zinc finger protein ENHYDROUS.